Here is an 84-residue protein sequence, read N- to C-terminus: Exodeoxyribonuclease 7 small subunit (84 aa).

It belongs to the XseB family. Heterooligomer composed of large and small subunits.

It localises to the cytoplasm. The catalysed reaction is Exonucleolytic cleavage in either 5'- to 3'- or 3'- to 5'-direction to yield nucleoside 5'-phosphates.. Its function is as follows. Bidirectionally degrades single-stranded DNA into large acid-insoluble oligonucleotides, which are then degraded further into small acid-soluble oligonucleotides. The chain is Exodeoxyribonuclease 7 small subunit from Bacillus velezensis (strain DSM 23117 / BGSC 10A6 / LMG 26770 / FZB42) (Bacillus amyloliquefaciens subsp. plantarum).